We begin with the raw amino-acid sequence, 491 residues long: GTPase Der (491 aa).

Positions 3–178 (AKIALVGRPN…EMRDLLPEED (176 aa)) constitute an EngA-type G 1 domain. Residues 9–16 (GRPNVGKS), 57–61 (DTGGI), and 130–133 (NKVD) contribute to the GTP site. The segment covering 198–224 (DAETEDGASASETEEDITEETVEDEPE) has biased composition (acidic residues). Positions 198 to 225 (DAETEDGASASETEEDITEETVEDEPEA) are disordered. Positions 227–400 (LRLCMLGRPN…LAARIRRECS (174 aa)) constitute an EngA-type G 2 domain. GTP is bound by residues 233-240 (GRPNAGKS), 280-284 (DTAGV), and 345-348 (NKMD). The 85-residue stretch at 401–485 (VRIPTGQLNR…PMRVHFRSSH (85 aa)) folds into the KH-like domain.

It belongs to the TRAFAC class TrmE-Era-EngA-EngB-Septin-like GTPase superfamily. EngA (Der) GTPase family. As to quaternary structure, associates with the 50S ribosomal subunit.

In terms of biological role, GTPase that plays an essential role in the late steps of ribosome biogenesis. The protein is GTPase Der of Nitratidesulfovibrio vulgaris (strain ATCC 29579 / DSM 644 / CCUG 34227 / NCIMB 8303 / VKM B-1760 / Hildenborough) (Desulfovibrio vulgaris).